A 610-amino-acid chain; its full sequence is UvrABC system protein C (610 aa).

One can recognise a GIY-YIG domain in the interval 16–94; the sequence is HQPGVYRMYN…IKQYLPKYNV (79 aa). Positions 204 to 239 constitute a UVR domain; it reads QQVLKQLIEKMEVASQQLRFEDAAKFRDQIQAIRRV.

It belongs to the UvrC family. As to quaternary structure, interacts with UvrB in an incision complex.

The protein resides in the cytoplasm. Its function is as follows. The UvrABC repair system catalyzes the recognition and processing of DNA lesions. UvrC both incises the 5' and 3' sides of the lesion. The N-terminal half is responsible for the 3' incision and the C-terminal half is responsible for the 5' incision. In Vibrio parahaemolyticus serotype O3:K6 (strain RIMD 2210633), this protein is UvrABC system protein C.